Reading from the N-terminus, the 94-residue chain is Large ribosomal subunit protein eL42 (94 aa).

The Zn(2+) site is built by Cys11, Cys14, Cys71, and Cys74. The segment at Cys11–Cys74 adopts a C4-type zinc-finger fold.

It belongs to the eukaryotic ribosomal protein eL42 family. Part of the 50S ribosomal subunit. Zn(2+) serves as cofactor.

Binds to the 23S rRNA. In Thermococcus kodakarensis (strain ATCC BAA-918 / JCM 12380 / KOD1) (Pyrococcus kodakaraensis (strain KOD1)), this protein is Large ribosomal subunit protein eL42.